The following is a 247-amino-acid chain: Sugar fermentation stimulation protein homolog (247 aa).

Belongs to the SfsA family.

This Methanococcoides burtonii (strain DSM 6242 / NBRC 107633 / OCM 468 / ACE-M) protein is Sugar fermentation stimulation protein homolog.